Consider the following 448-residue polypeptide: FAD-dependent monooxygenase srdH (448 aa).

FAD is bound by residues Glu32 and Arg107. The active site involves Gln227. Asp313 contributes to the FAD binding site.

Belongs to the paxM FAD-dependent monooxygenase family. Requires FAD as cofactor.

Its function is as follows. Highly reducing polyketide synthase; part of the gene cluster that mediates the biosynthesis of sordarial, a salicylic aldehyde structurally related to the phytotoxin pyriculol. The most interesting aspect of this pathway is formation of an aromatic product from the highly reducing polyketide synthase srdA. SrdA synthesizes a reduced polyketide chain from one molecule of acetyl-CoA and five molecules of malonyl-CoA. The polyketide chain is then reductively released as an aldehyde. The oxidoreductases srdC, srdD and srdE then oxidize one of the hydroxy groups to facilitate the intramolecular aldol condensation, followed by dehydration to yield a salicylic aldehyde. This aldehyde can undergo facile reduction by endogenous reductases to yield the alcohol 1-hydroxy-2-hydroxymethyl-3-pent-1,3-dienylbenzene. The flavin-dependent srdI counteract against the propensity of the aldehydes to be reduced under physiological conditions and is responsible for reoxidizing 1-hydroxy-2-hydroxymethyl-3-pent-1,3-dienylbenzene back to the salicylic aldehyde. This salicylic aldehyde is then selectively epoxidized by the cupin-domain-containing oxidoreductase srdB to yield the epoxide, which can be hydrolyzed stereoselectively by the hydrolase srdG to give the final product sordarial. The sequence is that of FAD-dependent monooxygenase srdH from Neurospora crassa (strain ATCC 24698 / 74-OR23-1A / CBS 708.71 / DSM 1257 / FGSC 987).